A 3001-amino-acid chain; its full sequence is BEACH domain-containing protein C2 (3001 aa).

Disordered regions lie at residues 43 to 80 (DFEQVSLGDQEKAANESQGDLQEPGSFSNSDHGRSSFG), 103 to 156 (DVQS…KATV), 1018 to 1076 (NVLA…NVGS), 1846 to 1868 (TFSSFQKPLEPPNNNAPPRPRDK), 2039 to 2071 (YSGTDHHGAAADYDDQTETKSDNGSKGSQSNPP), 2101 to 2132 (AEEHKRDEGRISGSHEHASRTSAGNSDPRTSN), and 2193 to 2212 (NLADHSDESQSGDQEKDRSW). S48 carries the post-translational modification Phosphoserine. Polar residues-rich tracts occupy residues 57-72 (NESQGDLQEPGSFSNS), 121-132 (SMQQSLSETSLD), and 1037-1050 (SPYNESGSVKQLDS). Positions 1854 to 1863 (LEPPNNNAPP) are enriched in pro residues. The segment covering 2101–2119 (AEEHKRDEGRISGSHEHAS) has biased composition (basic and acidic residues). Polar residues predominate over residues 2120–2129 (RTSAGNSDPR). The BEACH-type PH domain maps to 2151-2260 (ELDERILLEL…GRRNAYRAIV (110 aa)). Residues 2196–2211 (DHSDESQSGDQEKDRS) show a composition bias toward basic and acidic residues. Residues 2275 to 2564 (QRPEQLLRRT…QLLTVPHMKR (290 aa)) form the BEACH domain. WD repeat units lie at residues 2679-2718 (SGIRSSSVIAITSDGEIITGGHADNSIKLVSSDGAKTLET), 2721-2760 (GHCAPVTCLALSPDNNFLVTGSRDSTVLLWRIHKAFTSRT), 2802-2841 (GHRRELVCCCVSSDQGVVVSSSESSDVLLHSIRKGRLIRR), 2842-2881 (LVGVKADSLCISSDGVIMAWSSSEGSISVFTINGVLIAKA), and 2953-2992 (GQGQDITALALNVDNTNLLVSTEDKQLIIFTDPALSLKVV).

This Arabidopsis thaliana (Mouse-ear cress) protein is BEACH domain-containing protein C2.